The primary structure comprises 661 residues: UvrABC system protein B (661 aa).

The Helicase ATP-binding domain maps to 31–186; the sequence is DNIEGGEKAQ…LLNALVDIQF (156 aa). 44–51 provides a ligand contact to ATP; that stretch reads GATGTGKT. Residues 97-120 carry the Beta-hairpin motif; sequence YYDYYQPEAYVPSSDTYIEKDSSV. Residues 435-601 enclose the Helicase C-terminal domain; that stretch reads QMDDLLGEIN…TIKKEIRDLI (167 aa). The UVR domain occupies 626-661; it reads KAMIKKLEGQMQEAAEVLDFELAAQIRDMVIELKNM.

The protein belongs to the UvrB family. Forms a heterotetramer with UvrA during the search for lesions. Interacts with UvrC in an incision complex.

Its subcellular location is the cytoplasm. Its function is as follows. The UvrABC repair system catalyzes the recognition and processing of DNA lesions. A damage recognition complex composed of 2 UvrA and 2 UvrB subunits scans DNA for abnormalities. Upon binding of the UvrA(2)B(2) complex to a putative damaged site, the DNA wraps around one UvrB monomer. DNA wrap is dependent on ATP binding by UvrB and probably causes local melting of the DNA helix, facilitating insertion of UvrB beta-hairpin between the DNA strands. Then UvrB probes one DNA strand for the presence of a lesion. If a lesion is found the UvrA subunits dissociate and the UvrB-DNA preincision complex is formed. This complex is subsequently bound by UvrC and the second UvrB is released. If no lesion is found, the DNA wraps around the other UvrB subunit that will check the other stand for damage. In Streptococcus suis (strain 98HAH33), this protein is UvrABC system protein B.